The following is a 352-amino-acid chain: N-acetyl-gamma-glutamyl-phosphate reductase (352 aa).

The active site involves cysteine 155.

This sequence belongs to the NAGSA dehydrogenase family. Type 1 subfamily.

The protein localises to the cytoplasm. The enzyme catalyses N-acetyl-L-glutamate 5-semialdehyde + phosphate + NADP(+) = N-acetyl-L-glutamyl 5-phosphate + NADPH + H(+). The protein operates within amino-acid biosynthesis; L-arginine biosynthesis; N(2)-acetyl-L-ornithine from L-glutamate: step 3/4. In terms of biological role, catalyzes the NADPH-dependent reduction of N-acetyl-5-glutamyl phosphate to yield N-acetyl-L-glutamate 5-semialdehyde. The sequence is that of N-acetyl-gamma-glutamyl-phosphate reductase from Synechococcus elongatus (strain ATCC 33912 / PCC 7942 / FACHB-805) (Anacystis nidulans R2).